The sequence spans 196 residues: Carnitine operon protein CaiE (196 aa).

The disordered stretch occupies residues 173–196 (TQPLRQMEENRPRLQGTTDVTPKR). Positions 187–196 (QGTTDVTPKR) are enriched in polar residues.

It belongs to the transferase hexapeptide repeat family.

The protein operates within amine and polyamine metabolism; carnitine metabolism. Its function is as follows. Overproduction of CaiE stimulates the activity of CaiB and CaiD. This is Carnitine operon protein CaiE from Escherichia coli O139:H28 (strain E24377A / ETEC).